A 294-amino-acid polypeptide reads, in one-letter code: Probable WRKY transcription factor 70 (294 aa).

Residues 72–94 (SQNASCDNDGKFEDSGDSRKRLG) form a disordered region. Basic and acidic residues predominate over residues 79–91 (NDGKFEDSGDSRK). Residues 90-97 (RKRLGPVK) carry the Nuclear localization signal motif. Positions 114 to 182 (IESTILEDAF…YIGNHTCNTN (69 aa)) form a DNA-binding region, WRKY. The interval 201–229 (SEDHKSPSLSTSMKEEDNPHRHHGSSTEN) is disordered.

Belongs to the WRKY group III family. Interacts with WRKY30. Binds to BZR2/BES1 to cooperatively regulate the expression of target genes. Binds to unmodified (i.e. not sumoylated) NPR1. Phosphorylated and destabilized by ASK7/BIN2. As to expression, expressed in leaves and flowers.

The protein localises to the nucleus. In terms of biological role, transcription factor involved in senescence, biotic and abiotic stress responses by modulating various phytohormones signaling pathways. Interacts specifically with the W box (5'-(T)TGAC[CT]-3'), a frequently occurring elicitor-responsive cis-acting element. Binds to the 5'-[CT]GACTTTT-3' motif in promoters of target genes to induce their expression. Binding to the W-box element of PR-1 promoter is mediated by not-sumoylated NPR1 in the absence of salicylic acid. Plays an important but not indispensable role in jasmonate and salicylic acid signaling. Positively regulates the salicylic acid (SA)-mediated signal pathway, but negatively the jasmonic acid (JA)-mediated signal pathway, thus determining the balance between these mutually antagonistic pathways. Together with WRKY46, WRKY53 and WRKY54, prevents defense response to the necrotrophic pathogens P.carotovorum and B.cinerea, but promotes defense responses (including SA-induced pathogenesis-related (PR) genes expression) against biotrophic/hemibiotrophic SA-monitored pathogens (e.g. P.syringae, E.carotovora subsp. carotovora SCC3193 and E.cichoracearum), probably by regulating negatively the JA/ET and positively the SA signaling pathways. Contributes to the suppression of jasmonic acid (MeJA)-induced expression of JA-responsive genes (e.g. PDF1.2). Promotes susceptibility to JA-monitored pathogens (e.g. A.brassicicola), probably by facilitating SA-controlled suppression of JA-mediated defense. Represses the biosynthesis of the phytoalexin camalexin and indol-3-ylmethyl glucosinolate (IGS). Represses both SA and JA/ethylene (ET) mediated defense marker genes expression. Negative regulator of SA biosynthesis. Negative regulator of EDS1-dependent defense against E.amylovora. Required for RPP4-mediated disease resistance and basal defense against H.parasitica, probably via late up-regulation (LURP) of resistance genes (e.g. CML10/CaBP22 and LURP1). Probably involved in defense responses toward insects (e.g. P.xylostella and B.brassicae). Together with WRKY54, negative regulator of developmental senescence, probably via the regulation of several senescence-associated markers genes. Together with WRKY46 and WRKY54, promotes brassinosteroid (BR)-regulated plant growth but prevent drought response by modulating gene expression. In collaboration with WRKY54, prevents stomatal closure and, consequently, osmotic stress tolerance. Regulates rhizobacterium B.cereus AR156-induced systemic resistance (ISR) to P.syringae pv. tomato DC3000. The polypeptide is Probable WRKY transcription factor 70 (Arabidopsis thaliana (Mouse-ear cress)).